Consider the following 396-residue polypeptide: FAD-dependent monooxygenase phomE' (396 aa).

Glu3 lines the FAD pocket. Active-site residues include Arg158 and Tyr196. FAD is bound by residues Asp277 and Gly290.

This sequence belongs to the paxM FAD-dependent monooxygenase family. As to quaternary structure, monomer. It depends on FAD as a cofactor.

Functionally, FAD-dependent monooxygenase; part of the gene cluster that mediates the biosynthesis of the phomopsins, a group of hexapeptide mycotoxins which infects lupins and causes lupinosis disease in livestock. The role of phomE' within the phomopsins biosynthesis pathway has still to be determined. The pathway starts with the processing of the precursor phomA by several endopeptidases including kexin proteases as well as the cluster-specific S41 family peptidase phomP1 and the oligopeptidase phomG to produce 10 identical copies of the hexapeptide Tyr-Val-Ile-Pro-Ile-Asp. After being excised from the precursor peptide, the core peptides are cyclized and modified post-translationally by enzymes encoded within the gene cluster. The timing and order of proteolysis of the phomA precursor and PTMs are still unknown. Two tyrosinase-like enzymes, phomQ1 and phomQ2, catalyze the chlorination and hydroxylation of Tyr, respectively. PhomYb, is proposed to be involved in the construction of the macrocyclic structure. The other 4 ustYa family proteins may be involved in PTMs that generate the unique structure of phomopsin A. PhomYa is required for the hydroxylation of C-beta of Tyr. PhomYc, phomYd, and phomYe are responsible for the biosynthesis of 2,3-dehydroisoleucine (dIle), 2,3-dehydroaspartic acid (dAsp), and 3,4-dehydroproline (dPro), respectively. While dIle formation by phomYc is indispensable for the installation of dAsp by phomYd, the order of the other PTMs have not been elucidated yet. Most of the biosynthetic enzymes likely have broad substrate specificity, and thus, there might be a metabolic grid from a precursor to phomopsin A. The enzyme(s) responsible for the biosynthesis of 3,4-dehydrovaline (dVal) have also not been identified yet. Finally, phomM acts as an S-adenosylmethionine-dependent alpha-N-methyltransferase that catalyzes two successive N-methylation reactions, converting N-desmethyl-phomopsin A to phomopsin A and phomopsin A further to an N,N-dimethylated congener called phomopsin E. In Diaporthe leptostromiformis (Lupinosis disease fungus), this protein is FAD-dependent monooxygenase phomE'.